A 294-amino-acid polypeptide reads, in one-letter code: Urease accessory protein UreD 1 (294 aa).

Residues 1 to 20 (MALSLDDLPEKPAPAEPVSA) are disordered.

Belongs to the UreD family. In terms of assembly, ureD, UreF and UreG form a complex that acts as a GTP-hydrolysis-dependent molecular chaperone, activating the urease apoprotein by helping to assemble the nickel containing metallocenter of UreC. The UreE protein probably delivers the nickel.

It is found in the cytoplasm. Functionally, required for maturation of urease via the functional incorporation of the urease nickel metallocenter. The chain is Urease accessory protein UreD 1 from Methylorubrum populi (strain ATCC BAA-705 / NCIMB 13946 / BJ001) (Methylobacterium populi).